The following is a 218-amino-acid chain: Histone H1.1 (218 aa).

Positions 1–42 (MSEVALPAPAASTSPEKPSAGKKAKKPAKAAAAAKKKPAGPS) are disordered. S2 is modified (N-acetylserine). S2 and S12 each carry phosphoserine. N6-acetyllysine is present on K17. Residues 20 to 38 (AGKKAKKPAKAAAAAKKKP) show a composition bias toward basic residues. Position 37 is an N6-(beta-hydroxybutyryl)lysine (K37). The region spanning 39–112 (AGPSVSELIV…GASGSFKLNK (74 aa)) is the H15 domain. Residue S44 is modified to Phosphoserine. K55 bears the N6-(beta-hydroxybutyryl)lysine mark. R57 is subject to Citrulline. An N6-(beta-hydroxybutyryl)lysine modification is found at K67. K78 is subject to N6-acetyllysine. The residue at position 88 (K88) is an N6-(beta-hydroxybutyryl)lysine. Residue K93 is modified to N6-(beta-hydroxybutyryl)lysine; alternate. K93 carries the post-translational modification N6-acetyllysine; alternate. At S107 the chain carries Phosphoserine; by PKC. K109 is modified (N6-(beta-hydroxybutyryl)lysine). Residues 116–218 (SVDAKPTATK…KPKKAAPKKK (103 aa)) are disordered. Residues 119-149 (AKPTATKVATKTKVTSASKKPKKASGAAAAK) show a composition bias toward low complexity. K125 carries the N6-acetyllysine modification. Composition is skewed to basic residues over residues 150 to 183 (KSVK…KKVA) and 190 to 218 (KAVK…PKKK). T206 carries the phosphothreonine modification.

Belongs to the histone H1/H5 family. Interacts with DFFB. Post-translationally, H1 histones are progressively phosphorylated during the cell cycle, becoming maximally phosphorylated during late G2 phase and M phase, and being dephosphorylated sharply thereafter. Citrullination at Arg-57 (H1R54ci) by PADI4 takes place within the DNA-binding site of H1 and results in its displacement from chromatin and global chromatin decondensation, thereby promoting pluripotency and stem cell maintenance.

It is found in the nucleus. It localises to the chromosome. H1 histones bind to linker DNA between nucleosomes forming the macromolecular structure known as the chromatin fiber. H1 histones are necessary for the condensation of nucleosome chains into higher-order structured fibers. Also acts as a regulator of individual gene transcription through chromatin remodeling. The polypeptide is Histone H1.1 (Bos taurus (Bovine)).